We begin with the raw amino-acid sequence, 458 residues long: Protein adenylyltransferase FICD (458 aa).

Topologically, residues 1 to 23 (MMLIPMASVMAVTEPKWVSVWSR) are cytoplasmic. The helical; Signal-anchor for type II membrane protein transmembrane segment at 24–44 (FLWVTLLSMVLGSLLALLLPL) threads the bilayer. Topologically, residues 45-458 (GAVEEQCLAV…GFKETLPVKP (414 aa)) are lumenal. S79 is subject to O-AMP-serine; by autocatalysis. T80 bears the O-AMP-threonine; by autocatalysis mark. 2 TPR repeats span residues 106 to 139 (ARAA…DPDF) and 140 to 173 (VDAL…SPYH). T183 is subject to O-AMP-threonine; by autocatalysis. The short motif at 230–235 (TVAIEG) is the Inhibitory (S/T)XXXE(G/N) motif element. Residue E234 participates in ATP binding. Residue N275 is glycosylated (N-linked (GlcNAc...) asparagine). The Fido domain occupies 285–420 (VTISDVLEIH…VRPFIRFIAK (136 aa)). 316-319 (VGHH) lines the ATP pocket. The active site involves H363. Residues 367–374 (DGNGRTSR), 399–400 (YY), and N407 contribute to the ATP site. N446 carries an N-linked (GlcNAc...) asparagine glycan.

The protein belongs to the fic family. In terms of assembly, homodimer. Interacts with HD. It depends on Mg(2+) as a cofactor. Mn(2+) serves as cofactor. In terms of processing, auto-AMPylated in vitro; it is unclear whether auto-AMPylation is relevant in vivo. N-glycosylated; predominantly glycosylated at Asn-275. As to expression, ubiquitous.

The protein localises to the endoplasmic reticulum membrane. It catalyses the reaction L-tyrosyl-[protein] + ATP = O-(5'-adenylyl)-L-tyrosyl-[protein] + diphosphate. The enzyme catalyses 3-O-(5'-adenylyl)-L-threonyl-[protein] + H2O = L-threonyl-[protein] + AMP + H(+). It carries out the reaction L-threonyl-[protein] + ATP = 3-O-(5'-adenylyl)-L-threonyl-[protein] + diphosphate. The side chain of Glu-234 determines which of the two opposing activities (AMPylase or de-AMPylase) will take place. In response to endoplasmic reticulum stress, mediates de-AMPylase activity. Adenylyltransferase activity is inhibited by the inhibitory helix present at the N-terminus: Glu-234 binds ATP and competes with ATP-binding at Arg-374, thereby preventing adenylyltransferase activity. In unstressed cells, disengagement of Glu-234 promotes adenylyltransferase activity. Activation dissociates ATP-binding from Glu-234, allowing ordered binding of the entire ATP moiety with the alpha-phosphate in an orientation that is productive for accepting an incoming target hydroxyl side chain. In terms of biological role, protein that can both mediate the addition of adenosine 5'-monophosphate (AMP) to specific residues of target proteins (AMPylation), and the removal of the same modification from target proteins (de-AMPylation), depending on the context. The side chain of Glu-231 determines which of the two opposing activities (AMPylase or de-AMPylase) will take place. Acts as a key regulator of the ERN1/IRE1-mediated unfolded protein response (UPR) by mediating AMPylation or de-AMPylation of HSPA5/BiP. In unstressed cells, acts as an adenylyltransferase by mediating AMPylation of HSPA5/BiP at 'Thr-518', thereby inactivating it. In response to endoplasmic reticulum stress, acts as a phosphodiesterase by mediating removal of ATP (de-AMPylation) from HSPA5/BiP at 'Thr-518', leading to restore HSPA5/BiP activity. Although it is able to AMPylate RhoA, Rac and Cdc42 Rho GTPases in vitro, Rho GTPases do not constitute physiological substrates. This Homo sapiens (Human) protein is Protein adenylyltransferase FICD.